The primary structure comprises 207 residues: Holliday junction branch migration complex subunit RuvA (207 aa).

Residues 1 to 64 (MIGRLRGNLL…EDAQLLYGFN (64 aa)) form a domain I region. The domain II stretch occupies residues 65–143 (TKNERALFRE…GWGAGDLFTP (79 aa)). The segment at 144–158 (ATDAAPMDDGSEFIT) is flexible linker. The domain III stretch occupies residues 159–207 (SPQSAVDEAVSALIALGYKPQQASKTVSQIAKPDMTSEVLIRESLKSMI).

The protein belongs to the RuvA family. In terms of assembly, homotetramer. Forms an RuvA(8)-RuvB(12)-Holliday junction (HJ) complex. HJ DNA is sandwiched between 2 RuvA tetramers; dsDNA enters through RuvA and exits via RuvB. An RuvB hexamer assembles on each DNA strand where it exits the tetramer. Each RuvB hexamer is contacted by two RuvA subunits (via domain III) on 2 adjacent RuvB subunits; this complex drives branch migration. In the full resolvosome a probable DNA-RuvA(4)-RuvB(12)-RuvC(2) complex forms which resolves the HJ.

The protein resides in the cytoplasm. Its function is as follows. The RuvA-RuvB-RuvC complex processes Holliday junction (HJ) DNA during genetic recombination and DNA repair, while the RuvA-RuvB complex plays an important role in the rescue of blocked DNA replication forks via replication fork reversal (RFR). RuvA specifically binds to HJ cruciform DNA, conferring on it an open structure. The RuvB hexamer acts as an ATP-dependent pump, pulling dsDNA into and through the RuvAB complex. HJ branch migration allows RuvC to scan DNA until it finds its consensus sequence, where it cleaves and resolves the cruciform DNA. The chain is Holliday junction branch migration complex subunit RuvA from Aliivibrio fischeri (strain ATCC 700601 / ES114) (Vibrio fischeri).